Here is a 399-residue protein sequence, read N- to C-terminus: Phosphoglycerate kinase (399 aa).

Substrate-binding positions include 24–26, arginine 39, 62–65, arginine 121, and arginine 154; these read DYN and HLGR. ATP is bound by residues lysine 204, glycine 295, glutamate 326, and 355–358; that span reads GGDS.

This sequence belongs to the phosphoglycerate kinase family. In terms of assembly, monomer.

The protein localises to the cytoplasm. The catalysed reaction is (2R)-3-phosphoglycerate + ATP = (2R)-3-phospho-glyceroyl phosphate + ADP. The protein operates within carbohydrate degradation; glycolysis; pyruvate from D-glyceraldehyde 3-phosphate: step 2/5. This Elusimicrobium minutum (strain Pei191) protein is Phosphoglycerate kinase.